The sequence spans 115 residues: Cytochrome c (115 aa).

Cysteine 26, cysteine 29, histidine 30, and methionine 91 together coordinate heme c.

This sequence belongs to the cytochrome c family. In terms of processing, binds 1 heme c group covalently per subunit.

Its subcellular location is the mitochondrion intermembrane space. In terms of biological role, electron carrier protein. The oxidized form of the cytochrome c heme group can accept an electron from the heme group of the cytochrome c1 subunit of cytochrome reductase. Cytochrome c then transfers this electron to the cytochrome oxidase complex, the final protein carrier in the mitochondrial electron-transport chain. This chain is Cytochrome c, found in Theileria parva (East coast fever infection agent).